A 128-amino-acid chain; its full sequence is Large ribosomal subunit protein bL20c (128 aa).

This sequence belongs to the bacterial ribosomal protein bL20 family.

The protein resides in the plastid. The protein localises to the chloroplast. Its function is as follows. Binds directly to 23S ribosomal RNA and is necessary for the in vitro assembly process of the 50S ribosomal subunit. It is not involved in the protein synthesizing functions of that subunit. The chain is Large ribosomal subunit protein bL20c from Trachelium caeruleum (Blue throatwort).